A 345-amino-acid chain; its full sequence is cAMP-responsive element modulator (345 aa).

A KID domain is found at 88 to 147 (VQVAAIAETDESAESEGVIDSHKRREILSRRPSYRKILNELSSDVPGVPKIEEERSEEEG). Phosphoserine occurs at positions 102, 129, 271, 274, and 277. A bZIP domain is found at 286-345 (TRKRELRLMKNREAAKECRRRKKEYVKCLESRVAVLEVQNKKLIEELETLKDICSPKTDY). The segment at 287-312 (RKRELRLMKNREAAKECRRRKKEYVK) is basic motif. The segment at 314-335 (LESRVAVLEVQNKKLIEELETL) is leucine-zipper.

This sequence belongs to the bZIP family. In terms of assembly, binds DNA as a dimer. Interacts with FHL5. Interacts with CDC34. May interact with TSSK4. In terms of processing, isoform 9 is ubiquitinated by CDC34 and RAD6B in order to be degraded by the proteasome. Post-translationally, stimulated by phosphorylation. Phosphorylated on Ser-116 by TSSK4 in vitro. Expressed in testes (round spermatids) (at protein level). Isoform 14 is the major activator form in testes.

The protein localises to the nucleus. It localises to the cytoplasm. In terms of biological role, transcriptional regulator that binds the cAMP response element (CRE), a sequence present in many viral and cellular promoters. Isoforms are either transcriptional activators or repressors. Plays a role in spermatogenesis and is involved in spermatid maturation. Its function is as follows. May play a role in the regulation of the circadian clock: acts as a transcriptional repressor of the core circadian component PER1 by directly binding to cAMP response elements in its promoter. This is cAMP-responsive element modulator from Homo sapiens (Human).